The chain runs to 563 residues: Protein NOXP20 (563 aa).

The segment at 1–84 is disordered; it reads MSDDAGDTLA…ANALEPPLNG (84 aa). The span at 56–68 shows a compositional bias: low complexity; sequence AAVQGAGAAAIGP. Ser120 carries the phosphoserine modification. The disordered stretch occupies residues 165–206; sequence VNSGSSEGAQPNTENGVPEITDAATDQGPAESPPTSPSSASR. The span at 166–179 shows a compositional bias: polar residues; it reads NSGSSEGAQPNTEN. A phosphothreonine mark is found at Thr185 and Thr189. The residue at position 196 (Ser196) is a Phosphoserine. Phosphothreonine is present on Thr199. A phosphoserine mark is found at Ser202 and Ser261. The stretch at 343-367 forms a coiled coil; sequence AAKELENEENQEEQGLEEKGEEFAR. The interval 411–436 is disordered; the sequence is SEEETKKEEKEEKSQDPQEDKKEEKK.

The protein belongs to the FAM114 family.

The protein resides in the cytoplasm. Its function is as follows. May play a role in neuronal cell development. The sequence is that of Protein NOXP20 (FAM114A1) from Homo sapiens (Human).